Reading from the N-terminus, the 402-residue chain is Phosphoglycerate kinase (402 aa).

Residues aspartate 24–asparagine 26, arginine 40, histidine 63–arginine 66, arginine 122, and arginine 155 each bind substrate. ATP is bound by residues lysine 206, glycine 297, glutamate 328, and glycine 357–serine 360.

It belongs to the phosphoglycerate kinase family. Monomer.

Its subcellular location is the cytoplasm. The catalysed reaction is (2R)-3-phosphoglycerate + ATP = (2R)-3-phospho-glyceroyl phosphate + ADP. Its pathway is carbohydrate degradation; glycolysis; pyruvate from D-glyceraldehyde 3-phosphate: step 2/5. This chain is Phosphoglycerate kinase, found in Synechococcus sp. (strain WH7803).